The following is a 381-amino-acid chain: Protein RecA (381 aa).

Gly79–Thr86 is an ATP binding site.

Belongs to the RecA family.

It localises to the cytoplasm. Functionally, can catalyze the hydrolysis of ATP in the presence of single-stranded DNA, the ATP-dependent uptake of single-stranded DNA by duplex DNA, and the ATP-dependent hybridization of homologous single-stranded DNAs. It interacts with LexA causing its activation and leading to its autocatalytic cleavage. This Streptococcus parasanguinis protein is Protein RecA.